The following is a 348-amino-acid chain: Protein RecA (348 aa).

Position 65–72 (65–72) interacts with ATP; sequence GPESSGKT.

It belongs to the RecA family.

The protein resides in the cytoplasm. Can catalyze the hydrolysis of ATP in the presence of single-stranded DNA, the ATP-dependent uptake of single-stranded DNA by duplex DNA, and the ATP-dependent hybridization of homologous single-stranded DNAs. It interacts with LexA causing its activation and leading to its autocatalytic cleavage. The protein is Protein RecA of Enterococcus faecalis (strain ATCC 700802 / V583).